The chain runs to 303 residues: Protoheme IX farnesyltransferase (303 aa).

Transmembrane regions (helical) follow at residues 26–46, 48–68, 98–118, 120–140, 148–168, 174–194, 221–241, 244–264, and 278–298; these read VVAL…PGMV, IDIL…AAAV, AILF…VWVN, LTAW…TFWL, IVIG…AVTG, ALLL…ALAV, ILLY…THML, LYLL…VAMM, and YSIV…YLLP.

It belongs to the UbiA prenyltransferase family. Protoheme IX farnesyltransferase subfamily.

The protein localises to the cell inner membrane. The catalysed reaction is heme b + (2E,6E)-farnesyl diphosphate + H2O = Fe(II)-heme o + diphosphate. Its pathway is porphyrin-containing compound metabolism; heme O biosynthesis; heme O from protoheme: step 1/1. In terms of biological role, converts heme B (protoheme IX) to heme O by substitution of the vinyl group on carbon 2 of heme B porphyrin ring with a hydroxyethyl farnesyl side group. The chain is Protoheme IX farnesyltransferase from Saccharophagus degradans (strain 2-40 / ATCC 43961 / DSM 17024).